Here is a 321-residue protein sequence, read N- to C-terminus: WD repeat-containing protein VIP3 (321 aa).

7 WD repeats span residues 12-55, 58-97, 100-140, 156-195, 198-238, 241-280, and 283-319; these read AHED…LVRT, GHSL…TIAV, APPS…LIST, SSKK…LLHQ, GHNM…LLGS, GHTS…AIQT, and NHND…SLYD.

Component of the nuclear PAF1 complex (PAF1C), which consists of VIP2/ELF7/PAF1, VIP3/SKI8/WDR61, VIP4/LEO1, VIP5/RTF1, VIP6/ELF8/CTR9 and CDC73. Component of the cytoplasmic SKI complex, which consists of SKI2, SKI3 and VIP3/SKI8. Interacts with VIP4 and VIP6.

It localises to the nucleus. The protein resides in the cytoplasm. Functionally, component of the PAF1 complex (PAF1C) which is involved in histone modifications such as methylation on histone H3 'Lys-4' (H3K4me3). Involved in regulation of flowering time. Required for the expression of the flowering repressor and MADS box gene FLC. Required for histone H3 trimethylation on 'Lys-4' (H3K4me3) and histone dimethylation on 'Lys-36' (H3K36me2) at the FLC locus. Prevents trimethylation on 'Lys-27' (H3K27me3) at the same locus. Not required for meiotic recombination or progression. Component of the SKI complex which is thought to be involved in exosome-mediated RNA decay and associates with transcriptionally active genes in a manner dependent on PAF1 complex (PAF1C). Required for proper progression of cell differentiation process. This chain is WD repeat-containing protein VIP3, found in Arabidopsis thaliana (Mouse-ear cress).